The sequence spans 95 residues: MQNFMNNLSGGSNKEGGEKSNDFLSSALGAEKQVKQAQTMKKISDMFPGSTSEKLAILNKINSASGGRVLETLGEIENSSSSQDEIITKLKGFLK.

Low complexity predominate over residues 1–12 (MQNFMNNLSGGS). The segment at 1-27 (MQNFMNNLSGGSNKEGGEKSNDFLSSA) is disordered.

This is an uncharacterized protein from Schizosaccharomyces pombe (strain 972 / ATCC 24843) (Fission yeast).